The chain runs to 406 residues: MKLSTLFTLATTISTLTTFTIASPVVVVEKRAINETALAEDIPTTKNNHAQTSYGKPFAIYQPKAFIISMFSLERDPWLKAMDFVHNITIPGLSPVYPDIHCTTNYTICQITTGEGEINAASSISALTLNPLFDLTKTYFLVGGIAGGEPNYTTIGGVTFAKYAVQVGLEYQLAYEDYHKTNPDWISGYIPYGTDDQNTYPGNVYGTEVFEVNEKLRDRAVELASKVHLNNGTEGNAKFRKLYNETAAQGLPKVVKCDSLTSDNYFTGNVLNDYFANFTLLMTNGSATYCSTAQEDNATLEVMTRLAKHGLVDYDRIMIMRTISDFSRPPPSMSAYEYFFNRSDGGISASLENLVIAGTPIIHDIVQNWDKIYESGEKYSSKNYVGDIFATLGGKPDFGKESFDTA.

An N-terminal signal peptide occupies residues 1 to 22 (MKLSTLFTLATTISTLTTFTIA).

The protein belongs to the NUP family. Post-translationally, predicted to be a substrate for cleavage by KEX2.

With respect to regulation, mammalian nucleoside transport inhibitors dipyridamole and NBMPR inhibit adenosine transport by NUP. Nucleoside permease that transports adenosine and guanosine. Does not show any transport activities towards cytidine, adenine, guanine, uridine, and uracil. This chain is Purine nucleoside permease, found in Candida albicans (strain SC5314 / ATCC MYA-2876) (Yeast).